Here is a 261-residue protein sequence, read N- to C-terminus: Carnitinyl-CoA dehydratase (261 aa).

Glu111 (nucleophile) is an active-site residue. Residue Glu131 is the Proton acceptor of the active site.

This sequence belongs to the enoyl-CoA hydratase/isomerase family.

It catalyses the reaction (R)-carnitinyl-CoA = crotonobetainyl-CoA + H2O. The protein operates within amine and polyamine metabolism; carnitine metabolism. Functionally, catalyzes the reversible dehydration of L-carnitinyl-CoA to crotonobetainyl-CoA. The sequence is that of Carnitinyl-CoA dehydratase from Salmonella typhimurium (strain LT2 / SGSC1412 / ATCC 700720).